A 117-amino-acid chain; its full sequence is Large ribosomal subunit protein bL20c (117 aa).

The protein belongs to the bacterial ribosomal protein bL20 family.

The protein localises to the plastid. Its subcellular location is the chloroplast. Functionally, binds directly to 23S ribosomal RNA and is necessary for the in vitro assembly process of the 50S ribosomal subunit. It is not involved in the protein synthesizing functions of that subunit. The sequence is that of Large ribosomal subunit protein bL20c from Manihot esculenta (Cassava).